A 266-amino-acid chain; its full sequence is Bidirectional sugar transporter SWEET7b (266 aa).

Over 1 to 9 (MVSPDLIRN) the chain is Extracellular. The helical transmembrane segment at 10-30 (MVGIVGNIISFGLFLSPVPTF) threads the bilayer. The 88-residue stretch at 10 to 97 (MVGIVGNIIS…TIFFLFSDKK (88 aa)) folds into the MtN3/slv 1 domain. Topologically, residues 31-45 (YRIIKNKDVQDFKAD) are cytoplasmic. Residues 46–66 (PYLATLLNCMLWVFYGLPIVH) traverse the membrane as a helical segment. Residues 67-69 (PNS) lie on the Extracellular side of the membrane. Residues 70 to 90 (ILVVTINGIGLIIEAVYLTIF) form a helical membrane-spanning segment. Residues 91–101 (FLFSDKKNKKK) lie on the Cytoplasmic side of the membrane. Residues 102–122 (MGVVLATEALFMAAVVLGVLL) form a helical membrane-spanning segment. Residues 123–131 (GAHTHQRRS) lie on the Extracellular side of the membrane. The chain crosses the membrane as a helical span at residues 132-152 (LIVGILCAIFGTIMYSSPLTI). The MtN3/slv 2 domain occupies 133–216 (IVGILCAIFG…LILYAIYYRT (84 aa)). Over 153–165 (MSQVVKTKSVEYM) the chain is Cytoplasmic. Residues 166-186 (PLLLSVVSFLNGLCWTSYALI) form a helical membrane-spanning segment. Topologically, residues 187-189 (RLD) are extracellular. The chain crosses the membrane as a helical span at residues 190 to 210 (IFITIPNGLGVLFALMQLILY). Residues 211–266 (AIYYRTTPKKQDKNLELPTVAPVAKDTSIVTPVSKDDDVVDGGNASHVTINITIEP) lie on the Cytoplasmic side of the membrane.

It belongs to the SWEET sugar transporter family. In terms of assembly, forms homooligomers and/or heterooligomers.

The protein resides in the cell membrane. Its function is as follows. Mediates both low-affinity uptake and efflux of sugar across the plasma membrane. This Oryza sativa subsp. indica (Rice) protein is Bidirectional sugar transporter SWEET7b (SWEET7B).